Here is a 294-residue protein sequence, read N- to C-terminus: tRNA dimethylallyltransferase (294 aa).

Residue 10-17 (GPTAVGKT) participates in ATP binding. A substrate-binding site is contributed by 12–17 (TAVGKT). The segment at 35–38 (DSQQ) is interaction with substrate tRNA.

This sequence belongs to the IPP transferase family. As to quaternary structure, monomer. It depends on Mg(2+) as a cofactor.

The catalysed reaction is adenosine(37) in tRNA + dimethylallyl diphosphate = N(6)-dimethylallyladenosine(37) in tRNA + diphosphate. Its function is as follows. Catalyzes the transfer of a dimethylallyl group onto the adenine at position 37 in tRNAs that read codons beginning with uridine, leading to the formation of N6-(dimethylallyl)adenosine (i(6)A). The chain is tRNA dimethylallyltransferase from Streptococcus pneumoniae serotype 2 (strain D39 / NCTC 7466).